Consider the following 587-residue polypeptide: Beta-(1--&gt;2)glucan export ATP-binding/permease protein NdvA (587 aa).

An ABC transmembrane type-1 domain is found at 21-301 (VSLVVVANIV…MRQFATQIFE (281 aa)). The next 6 membrane-spanning stretches (helical) occupy residues 23–43 (LVVVANIVLATITIAEPILFG), 57–77 (PILFMWATFAVFNTIAFVLVA), 128–148 (GLWLEFMRNHLSTVIALALLI), 158–178 (LSAVLMVLAIAYWLIGRVVMS), 248–268 (MASTIAMMVVLIIGTMLVQAG), and 272–292 (VGDVIAFIGFANLLIGRLDLM). In terms of domain architecture, ABC transporter spans 335–569 (IEFRDVSFGF…NGRFAALLRA (235 aa)). Residue 368-375 (GPTGAGKT) participates in ATP binding.

It belongs to the ABC transporter superfamily. Beta-(1--&gt;2)glucan exporter (TC 3.A.1.108.1) family. As to quaternary structure, homodimer.

The protein localises to the cell inner membrane. The enzyme catalyses [(1-&gt;2)-beta-D-glucosyl](n)(in) + ATP + H2O = [(1-&gt;2)-beta-D-glucosyl](n)(out) + ADP + phosphate + H(+). In terms of biological role, involved in beta-(1--&gt;2)glucan export. Transmembrane domains (TMD) form a pore in the inner membrane and the ATP-binding domain (NBD) is responsible for energy generation. The sequence is that of Beta-(1--&gt;2)glucan export ATP-binding/permease protein NdvA from Rhizobium johnstonii (strain DSM 114642 / LMG 32736 / 3841) (Rhizobium leguminosarum bv. viciae).